Reading from the N-terminus, the 515-residue chain is Monocarboxylate transporter 10 (515 aa).

The disordered stretch occupies residues 1 to 48 (MVLSQEEPDSARGTSEAQPLGPAPTGAAPPPGPGPSDSPEAAVEKVEV). At 1 to 66 (MVLSQEEPDS…EPHEPPEPPE (66 aa)) the chain is on the cytoplasmic side. Positions 17–26 (AQPLGPAPTG) are enriched in low complexity. Pro residues predominate over residues 27 to 36 (AAPPPGPGPS). Residues 67–87 (GGWGWLVMLAAMWCNGSVFGI) traverse the membrane as a helical segment. The Extracellular portion of the chain corresponds to 88–114 (QNACGVLFVSMLETFGSKDDDKMVFKT). A helical membrane pass occupies residues 115-135 (AWVGSLSMGMIFFCCPIVSVF). At 136–144 (TDLFGCRKT) the chain is on the cytoplasmic side. The helical transmembrane segment at 145–165 (AVVGAAVGFVGLMSSSFVSSI) threads the bilayer. At 166-171 (EPLYLT) the chain is on the extracellular side. A helical membrane pass occupies residues 172–192 (YGIIFACGCSFAYQPSLVILG). The Cytoplasmic segment spans residues 193 to 200 (HYFKKRLG). A helical transmembrane segment spans residues 201 to 221 (LVNGIVTAGSSVFTILLPLLL). At 222-228 (RVLIDSV) the chain is on the extracellular side. A helical membrane pass occupies residues 229–249 (GLFYTLRVLCIFMFVLFLAGF). At 250 to 291 (TYRPLATSTKDKESGGSGSSLFSRKKFSPPKKIFNFAIFKVT) the chain is on the cytoplasmic side. Residue S263 is modified to Phosphoserine. Residues 292 to 312 (AYAVWAVGIPLALFGYFVPYV) traverse the membrane as a helical segment. The Extracellular portion of the chain corresponds to 313 to 329 (HLMKHVNERFQDEKNKE). A helical membrane pass occupies residues 330 to 350 (VVLMCIGVTSGVGRLLFGRIA). D351 is a topological domain (cytoplasmic). A helical transmembrane segment spans residues 352–372 (YVPGVKKVYLQVLSFFFIGLM). Over 373 to 396 (SMMIPLCSIFGALIAVCLIMGLFD) the chain is Extracellular. Residues 397–417 (GCFISIMAPIAFELVGAQDVS) traverse the membrane as a helical segment. At 418-419 (QA) the chain is on the cytoplasmic side. A helical membrane pass occupies residues 420–440 (IGFLLGFMSIPMTVGPPIAGL). Residues 441-451 (LRDKLGSYDVA) lie on the Extracellular side of the membrane. A helical membrane pass occupies residues 452–472 (FYLAGVPPLIGGAVLCFIPWI). Residues 473–515 (HSKKQREISKTTGKEKMEKMLENQNSLLSSSSGMFKKESDSII) lie on the Cytoplasmic side of the membrane. A phosphoserine mark is found at S498, S501, S503, and S504.

The protein belongs to the major facilitator superfamily. Monocarboxylate porter (TC 2.A.1.13) family. Not N-glycosylated. In terms of tissue distribution, strongly expressed in kidney and skeletal muscle and at lower level in placenta and heart.

It localises to the cell membrane. It is found in the basolateral cell membrane. The enzyme catalyses 3,3',5-triiodo-L-thyronine(out) = 3,3',5-triiodo-L-thyronine(in). It carries out the reaction L-thyroxine(out) = L-thyroxine(in). It catalyses the reaction L-tryptophan(in) = L-tryptophan(out). The catalysed reaction is L-tyrosine(in) = L-tyrosine(out). The enzyme catalyses L-phenylalanine(in) = L-phenylalanine(out). Its function is as follows. Sodium- and proton-independent thyroid hormones and aromatic acids transporter. Mediates both uptake and efflux of 3,5,3'-triiodothyronine (T3) and 3,5,3',5'-tetraiodothyronine (T4) with high affinity, suggesting a role in the homeostasis of thyroid hormone levels. Responsible for low affinity bidirectional transport of the aromatic amino acids, such as phenylalanine, tyrosine, tryptophan and L-3,4-dihydroxyphenylalanine (L-dopa). Plays an important role in homeostasis of aromatic amino acids. The sequence is that of Monocarboxylate transporter 10 (SLC16A10) from Homo sapiens (Human).